The following is a 346-amino-acid chain: D-alanine--D-alanine ligase (346 aa).

The ATP-grasp domain maps to 125–325 (KRIWRSEGLP…YPALCLEVLR (201 aa)). 151-206 (FAALGSPMIVKPDREGSTIGLTKVTQIEQCGAAYALAARHDAMVLCEQFVKGDEVT) is a binding site for ATP. Mg(2+) contacts are provided by D278, E292, and N294.

It belongs to the D-alanine--D-alanine ligase family. Mg(2+) serves as cofactor. Requires Mn(2+) as cofactor.

Its subcellular location is the cytoplasm. It carries out the reaction 2 D-alanine + ATP = D-alanyl-D-alanine + ADP + phosphate + H(+). It participates in cell wall biogenesis; peptidoglycan biosynthesis. Its function is as follows. Cell wall formation. The sequence is that of D-alanine--D-alanine ligase from Albidiferax ferrireducens (strain ATCC BAA-621 / DSM 15236 / T118) (Rhodoferax ferrireducens).